We begin with the raw amino-acid sequence, 463 residues long: MVSTHLTSTTLPDCYRSLIVNSELGSSALMDLNSPSFLYPLLHTPADKGTLCTYQAALGKVYASLEVIGVGDDKLQAVHGLNGGKPHRDILGSRITRPTGIKPLCLPRHILAYDWLAQSLLGIVIGSISLAYNELLMMEKLKGFRPFVPHIPFDFYLCEMAFPRVKPAPDETSFSEALLKRNQDLAPNSAEQQIEEVRQVGSYKKGTMTTGHNVADLVVILKILPTFLTMLTNETGFEISSSDATVKILITTVPPNLRKLDPELHLDIKVLQSALAAIRHARWFEENASQSTVKVLIRLLKDLRIRFPGFEPLTPWILDLLGHYAVMNNPTRQPLALNVAYRRCLQILAAGLFLPGSVGITDPCESGNFRVHTVMTLEQQDMVCYTAQTLVRILSHGGFRKILGQEGDASYLASEISTWDGVIVTPSEKAYEKPPEKKEGEEEEENTEEPPQGEEEESMETQE.

R94 is modified (asymmetric dimethylarginine; alternate). R94 is modified (omega-N-methylarginine; alternate). The region spanning 108-444 (RHILAYDWLA…PEKKEGEEEE (337 aa)) is the DZF domain. Omega-N-methylarginine is present on R145. A Glycyl lysine isopeptide (Lys-Gly) (interchain with G-Cter in ubiquitin) cross-link involves residue K166. Phosphoserine occurs at positions 173 and 189. Residues K259 and K437 each participate in a glycyl lysine isopeptide (Lys-Gly) (interchain with G-Cter in SUMO2) cross-link. Residues 424–463 (VTPSEKAYEKPPEKKEGEEEEENTEEPPQGEEEESMETQE) form a disordered region. Residues 429 to 440 (KAYEKPPEKKEG) are compositionally biased toward basic and acidic residues. Over residues 441–463 (EEEEENTEEPPQGEEEESMETQE) the composition is skewed to acidic residues. Position 461 is a phosphothreonine (T461).

Forms heterodimers with ILF3. ILF2-ILF3 heterodimers may also bind to PRKDC/XRCC7: this may stabilize the interaction of PRKDC/XRCC7 and the heterodimeric complex of G22P1/KU70 and XRCC5/KU80. Forms a complex with ILF3, YLPM1, KHDRBS1, RBMX, NCOA5 and PPP1CA. Identified in a IGF2BP1-dependent mRNP granule complex containing untranslated mRNAs. Interacts with IGF2BP1. Interacts with CRBN; this interaction promotes ubiquitination and subsequent degradation of ILF2. In terms of processing, ubiquitinated at Lys-166 by CRBN with polyubiquitin chains by the CUL4-RING E3 ligase (CRL4-CRBN) and then degraded by the proteasome.

It is found in the nucleus. The protein localises to the nucleolus. Its subcellular location is the cytoplasm. In terms of biological role, chromatin-interacting protein that forms a stable heterodimer with interleukin enhancer-binding factor 3/ILF3 and plays a role in several biological processes including transcription, innate immunity or cell growth. Essential for the efficient reshuttling of ILF3 (isoform 1 and isoform 2) into the nucleus. Together with ILF3, forms an RNA-binding complex that is required for mitotic progression and cytokinesis by regulating the expression of a cluster of mitotic genes. Mechanistically, competes with STAU1/STAU2-mediated mRNA decay. Plays also a role in the inhibition of various viruses including Japanese encephalitis virus or enterovirus 71. The chain is Interleukin enhancer-binding factor 2 (Ilf2) from Rattus norvegicus (Rat).